A 622-amino-acid chain; its full sequence is Low affinity potassium transport system protein Kup (622 aa).

12 helical membrane passes run 12-32 (ITLA…LYTL), 49-69 (VFGF…LKYL), 101-121 (FLVI…VITP), 134-154 (IIAP…LTLL), 163-183 (GLVG…LAAL), 213-233 (VSFV…ALYA), 247-267 (WFTV…ALLL), 276-296 (PFFL…ATLA), 337-357 (IYIP…IVSF), 363-383 (LAAA…ILST), 395-415 (FLVA…FSAN), and 419-439 (IVSG…VMTT).

This sequence belongs to the HAK/KUP transporter (TC 2.A.72) family.

It localises to the cell inner membrane. It catalyses the reaction K(+)(in) + H(+)(in) = K(+)(out) + H(+)(out). Responsible for the low-affinity transport of potassium into the cell. Likely operates as a K(+):H(+) symporter. The chain is Low affinity potassium transport system protein Kup from Enterobacter sp. (strain 638).